A 365-amino-acid chain; its full sequence is UDP-N-acetylglucosamine--N-acetylmuramyl-(pentapeptide) pyrophosphoryl-undecaprenol N-acetylglucosamine transferase (365 aa).

UDP-N-acetyl-alpha-D-glucosamine is bound by residues 17 to 19 (TGG), N129, R167, S194, I250, 269 to 274 (ALTVSE), and Q295.

This sequence belongs to the glycosyltransferase 28 family. MurG subfamily.

The protein resides in the cell inner membrane. The enzyme catalyses di-trans,octa-cis-undecaprenyl diphospho-N-acetyl-alpha-D-muramoyl-L-alanyl-D-glutamyl-meso-2,6-diaminopimeloyl-D-alanyl-D-alanine + UDP-N-acetyl-alpha-D-glucosamine = di-trans,octa-cis-undecaprenyl diphospho-[N-acetyl-alpha-D-glucosaminyl-(1-&gt;4)]-N-acetyl-alpha-D-muramoyl-L-alanyl-D-glutamyl-meso-2,6-diaminopimeloyl-D-alanyl-D-alanine + UDP + H(+). It functions in the pathway cell wall biogenesis; peptidoglycan biosynthesis. Cell wall formation. Catalyzes the transfer of a GlcNAc subunit on undecaprenyl-pyrophosphoryl-MurNAc-pentapeptide (lipid intermediate I) to form undecaprenyl-pyrophosphoryl-MurNAc-(pentapeptide)GlcNAc (lipid intermediate II). The protein is UDP-N-acetylglucosamine--N-acetylmuramyl-(pentapeptide) pyrophosphoryl-undecaprenol N-acetylglucosamine transferase of Shewanella violacea (strain JCM 10179 / CIP 106290 / LMG 19151 / DSS12).